Consider the following 344-residue polypeptide: Phosphoribosylformylglycinamidine cyclo-ligase (344 aa).

The protein belongs to the AIR synthase family.

The protein localises to the cytoplasm. The enzyme catalyses 2-formamido-N(1)-(5-O-phospho-beta-D-ribosyl)acetamidine + ATP = 5-amino-1-(5-phospho-beta-D-ribosyl)imidazole + ADP + phosphate + H(+). The protein operates within purine metabolism; IMP biosynthesis via de novo pathway; 5-amino-1-(5-phospho-D-ribosyl)imidazole from N(2)-formyl-N(1)-(5-phospho-D-ribosyl)glycinamide: step 2/2. The polypeptide is Phosphoribosylformylglycinamidine cyclo-ligase (Haemophilus influenzae (strain PittEE)).